We begin with the raw amino-acid sequence, 145 residues long: 3-hydroxyacyl-[acyl-carrier-protein] dehydratase FabZ (145 aa).

Residue H50 is part of the active site.

This sequence belongs to the thioester dehydratase family. FabZ subfamily.

It localises to the cytoplasm. The catalysed reaction is a (3R)-hydroxyacyl-[ACP] = a (2E)-enoyl-[ACP] + H2O. In terms of biological role, involved in unsaturated fatty acids biosynthesis. Catalyzes the dehydration of short chain beta-hydroxyacyl-ACPs and long chain saturated and unsaturated beta-hydroxyacyl-ACPs. This chain is 3-hydroxyacyl-[acyl-carrier-protein] dehydratase FabZ, found in Coxiella burnetii (strain CbuK_Q154) (Coxiella burnetii (strain Q154)).